A 68-amino-acid chain; its full sequence is Alpha-conotoxin Lp1.1 (68 aa).

A signal peptide spans 1-21; that stretch reads MGMRMMFIMFMLVVLATTVVT. Residues 22 to 48 constitute a propeptide that is removed on maturation; the sequence is FTSDRALDAMNAAASNKASRLIALAVR. 2 cysteine pairs are disulfide-bonded: Cys-50-Cys-56 and Cys-51-Cys-64. A lacks the Ser-Xaa-Pro motif that is crucial for potent interaction with nAChR region spans residues 52–54; that stretch reads ARA. At Gly-65 the chain carries Glycine amide. The propeptide occupies 66–68; that stretch reads GGR.

The protein belongs to the conotoxin A superfamily. As to expression, expressed by the venom duct.

Its subcellular location is the secreted. Its function is as follows. Alpha-conotoxins act on postsynaptic membranes, they bind to the nicotinic acetylcholine receptors (nAChR) and thus inhibit them. Synthetic peptide inhibits alpha-6/alpha-3/beta-2 and alpha-3/beta-2 nicotinic acetylcholine receptors and causes uncoordinated movement when intramuscularly injected into goldfish. Has a distinct nAChR binding mode from other alpha-conotoxins, due to a different three residue motif (Ala-Xaa-Ala instead of the conserved Ser-Xaa-Pro motif). The polypeptide is Alpha-conotoxin Lp1.1 (Conus leopardus (Leopard cone)).